Here is a 728-residue protein sequence, read N- to C-terminus: Catalase-peroxidase 1 (728 aa).

Positions Trp-91–Tyr-218 form a cross-link, tryptophyl-tyrosyl-methioninium (Trp-Tyr) (with M-244). The active-site Proton acceptor is His-92. The tryptophyl-tyrosyl-methioninium (Tyr-Met) (with W-91) cross-link spans Tyr-218–Met-244. His-259 is a binding site for heme b.

This sequence belongs to the peroxidase family. Peroxidase/catalase subfamily. In terms of assembly, homodimer or homotetramer. Heme b is required as a cofactor. Post-translationally, formation of the three residue Trp-Tyr-Met cross-link is important for the catalase, but not the peroxidase activity of the enzyme.

The catalysed reaction is H2O2 + AH2 = A + 2 H2O. The enzyme catalyses 2 H2O2 = O2 + 2 H2O. Functionally, bifunctional enzyme with both catalase and broad-spectrum peroxidase activity. The sequence is that of Catalase-peroxidase 1 from Burkholderia cenocepacia (strain ATCC BAA-245 / DSM 16553 / LMG 16656 / NCTC 13227 / J2315 / CF5610) (Burkholderia cepacia (strain J2315)).